We begin with the raw amino-acid sequence, 209 residues long: ATP-dependent Clp protease proteolytic subunit 1 (209 aa).

Residue serine 109 is the Nucleophile of the active site. The active site involves histidine 134.

It belongs to the peptidase S14 family. In terms of assembly, fourteen ClpP subunits assemble into 2 heptameric rings which stack back to back to give a disk-like structure with a central cavity, resembling the structure of eukaryotic proteasomes.

Its subcellular location is the cytoplasm. The enzyme catalyses Hydrolysis of proteins to small peptides in the presence of ATP and magnesium. alpha-casein is the usual test substrate. In the absence of ATP, only oligopeptides shorter than five residues are hydrolyzed (such as succinyl-Leu-Tyr-|-NHMec, and Leu-Tyr-Leu-|-Tyr-Trp, in which cleavage of the -Tyr-|-Leu- and -Tyr-|-Trp bonds also occurs).. Its function is as follows. Cleaves peptides in various proteins in a process that requires ATP hydrolysis. Has a chymotrypsin-like activity. Plays a major role in the degradation of misfolded proteins. The protein is ATP-dependent Clp protease proteolytic subunit 1 of Corynebacterium diphtheriae (strain ATCC 700971 / NCTC 13129 / Biotype gravis).